Reading from the N-terminus, the 370-residue chain is DNA replication and repair protein RecF (370 aa).

30–37 (GENAQGKT) contacts ATP.

Belongs to the RecF family.

The protein resides in the cytoplasm. The RecF protein is involved in DNA metabolism; it is required for DNA replication and normal SOS inducibility. RecF binds preferentially to single-stranded, linear DNA. It also seems to bind ATP. This Staphylococcus aureus (strain USA300) protein is DNA replication and repair protein RecF.